We begin with the raw amino-acid sequence, 223 residues long: Small ribosomal subunit protein uS3 (223 aa).

The KH type-2 domain maps to 39 to 117; that stretch reads IREFLRKKPS…RPELNAKLVA (79 aa).

The protein belongs to the universal ribosomal protein uS3 family. As to quaternary structure, part of the 30S ribosomal subunit. Forms a tight complex with proteins S10 and S14.

Binds the lower part of the 30S subunit head. Binds mRNA in the 70S ribosome, positioning it for translation. This Chlamydia abortus (strain DSM 27085 / S26/3) (Chlamydophila abortus) protein is Small ribosomal subunit protein uS3.